We begin with the raw amino-acid sequence, 137 residues long: Probable glycine cleavage system H protein 1 (137 aa).

One can recognise a Lipoyl-binding domain in the interval 31-113; that stretch reads VAVIGITDYA…YGEGWIFKLK (83 aa). N6-lipoyllysine is present on lysine 72.

Belongs to the GcvH family. In terms of assembly, the glycine cleavage system is composed of four proteins: P, T, L and H. (R)-lipoate is required as a cofactor.

Functionally, the glycine cleavage system catalyzes the degradation of glycine. The H protein shuttles the methylamine group of glycine from the P protein to the T protein. The chain is Probable glycine cleavage system H protein 1 from Saccharolobus solfataricus (strain ATCC 35092 / DSM 1617 / JCM 11322 / P2) (Sulfolobus solfataricus).